We begin with the raw amino-acid sequence, 795 residues long: Phenylalanine--tRNA ligase beta subunit (795 aa).

The tRNA-binding domain maps to 39–149 (SGEFSGVVVA…ADAPIGVDIR (111 aa)). The 76-residue stretch at 402–477 (PKQPIIRLRR…RIYGYNRIPN (76 aa)) folds into the B5 domain. Positions 455, 461, 464, and 465 each coordinate Mg(2+). One can recognise an FDX-ACB domain in the interval 701–794 (SKFPANNRDI…LAQRFQASLR (94 aa)).

This sequence belongs to the phenylalanyl-tRNA synthetase beta subunit family. Type 1 subfamily. Tetramer of two alpha and two beta subunits. Mg(2+) serves as cofactor.

It localises to the cytoplasm. The enzyme catalyses tRNA(Phe) + L-phenylalanine + ATP = L-phenylalanyl-tRNA(Phe) + AMP + diphosphate + H(+). This is Phenylalanine--tRNA ligase beta subunit from Haemophilus ducreyi (strain 35000HP / ATCC 700724).